Consider the following 167-residue polypeptide: Lipoprotein signal peptidase (167 aa).

The next 3 membrane-spanning stretches (helical) occupy residues 10-30 (LIWL…KAWV), 68-88 (WQMW…TFWL), and 98-118 (SALP…DRFL). Active-site residues include Asp-124 and Asp-142. The helical transmembrane segment at 138–158 (FNLADSAIVAGAIGIGLLSLF) threads the bilayer.

The protein belongs to the peptidase A8 family.

The protein resides in the cell inner membrane. It catalyses the reaction Release of signal peptides from bacterial membrane prolipoproteins. Hydrolyzes -Xaa-Yaa-Zaa-|-(S,diacylglyceryl)Cys-, in which Xaa is hydrophobic (preferably Leu), and Yaa (Ala or Ser) and Zaa (Gly or Ala) have small, neutral side chains.. It functions in the pathway protein modification; lipoprotein biosynthesis (signal peptide cleavage). In terms of biological role, this protein specifically catalyzes the removal of signal peptides from prolipoproteins. The protein is Lipoprotein signal peptidase of Xylella fastidiosa (strain 9a5c).